Here is a 1025-residue protein sequence, read N- to C-terminus: Dihydropyrimidine dehydrogenase [NADP(+)] (1025 aa).

A propeptide spanning residues 1 to 3 (MAP) is cleaved from the precursor. One can recognise a 4Fe-4S ferredoxin-type 1 domain in the interval 69-100 (ERGALREAMRCLKCADAPCQKSCPTHLDIKSF). [4Fe-4S] cluster-binding residues include Cys-79, Cys-82, Cys-87, and Cys-91. Position 129 (Val-129) interacts with FAD. [4Fe-4S] cluster is bound by residues Cys-130, Cys-136, Cys-140, and Gln-156. FAD contacts are provided by residues 194–198 (GAGPA), 218–226 (EKQEYVGGL), Arg-235, and Leu-261. Residues 340–343 (AGDT), 364–365 (RK), and Arg-371 each bind NADP(+). The residue at position 384 (Lys-384) is an N6-acetyllysine. Residues 437-439 (AFG) and 481-487 (DIVGMAN) contribute to the NADP(+) site. Residue 480–489 (GDIVGMANTT) participates in FAD binding. FMN contacts are provided by residues Ser-550 and 574–575 (KT). Substrate contacts are provided by residues Asn-609 and 668–670 (NLS). Residue Cys-671 is the Proton acceptor of the active site. Lys-709 contributes to the FMN binding site. 736–737 (NT) provides a ligand contact to substrate. Residues Gly-767, 793–795 (TGG), and 816–817 (CS) each bind FMN. 2 4Fe-4S ferredoxin-type domains span residues 944 to 976 (VVAVIDEEMCINCGKCYMTCNDSGYQAIQFDPE) and 978 to 1007 (HLPTVTDTCTGCTLCLSVCPIIDCIRMVSR). Residues Cys-953, Cys-956, Cys-959, Cys-963, Cys-986, Cys-989, Cys-992, and Cys-996 each coordinate [4Fe-4S] cluster.

The protein belongs to the dihydropyrimidine dehydrogenase family. In terms of assembly, homodimer. Requires FAD as cofactor. It depends on FMN as a cofactor. [4Fe-4S] cluster is required as a cofactor.

The protein resides in the cytoplasm. It carries out the reaction 5,6-dihydrouracil + NADP(+) = uracil + NADPH + H(+). The catalysed reaction is 5,6-dihydrothymine + NADP(+) = thymine + NADPH + H(+). It functions in the pathway amino-acid biosynthesis; beta-alanine biosynthesis. With respect to regulation, inactivated by 5-iodouracil. In terms of biological role, involved in pyrimidine base degradation. Catalyzes the reduction of uracil and thymine. The polypeptide is Dihydropyrimidine dehydrogenase [NADP(+)] (DPYD) (Sus scrofa (Pig)).